A 347-amino-acid chain; its full sequence is 4-hydroxy-2-oxovalerate aldolase 1 (347 aa).

In terms of domain architecture, Pyruvate carboxyltransferase spans 13 to 265 (IRVTDTSLRD…KTGIDFFAIA (253 aa)). Substrate is bound at residue 21 to 22 (RD). Aspartate 22 contributes to the Mn(2+) binding site. Catalysis depends on histidine 25, which acts as the Proton acceptor. Substrate contacts are provided by serine 175 and histidine 204. Histidine 204 and histidine 206 together coordinate Mn(2+). Tyrosine 295 provides a ligand contact to substrate.

Belongs to the 4-hydroxy-2-oxovalerate aldolase family.

The enzyme catalyses (S)-4-hydroxy-2-oxopentanoate = acetaldehyde + pyruvate. This Rhodococcus erythropolis (strain PR4 / NBRC 100887) protein is 4-hydroxy-2-oxovalerate aldolase 1.